The following is a 461-amino-acid chain: Fumarate hydratase class II (461 aa).

Substrate-binding positions include 99-101 (SGT), arginine 127, 130-133 (HPND), 140-142 (SSN), and threonine 188. The active-site Proton donor/acceptor is the histidine 189. Serine 319 is an active-site residue. Residues serine 320 and 325 to 327 (KVN) each bind substrate.

Belongs to the class-II fumarase/aspartase family. Fumarase subfamily. Homotetramer.

Its subcellular location is the cytoplasm. It catalyses the reaction (S)-malate = fumarate + H2O. The protein operates within carbohydrate metabolism; tricarboxylic acid cycle; (S)-malate from fumarate: step 1/1. In terms of biological role, involved in the TCA cycle. Catalyzes the stereospecific interconversion of fumarate to L-malate. This chain is Fumarate hydratase class II, found in Chromobacterium violaceum (strain ATCC 12472 / DSM 30191 / JCM 1249 / CCUG 213 / NBRC 12614 / NCIMB 9131 / NCTC 9757 / MK).